A 159-amino-acid polypeptide reads, in one-letter code: Protein phosphatase 1 regulatory subunit 17 (159 aa).

Disordered stretches follow at residues 1-79 (MSTE…HIPP) and 98-127 (RIPK…PALH). Basic and acidic residues-rich tracts occupy residues 62-73 (SDQKKPRRKDTP) and 111-124 (SDME…KDTP). Phosphothreonine; by PKG/PRKG1 occurs at positions 72 and 123.

Substrate for cGMP-dependent protein kinase. Phosphorylation of Thr-72 and Thr-123 is required for its phosphatase activity. Phosphorylated by PRKG1 isoform alpha. In terms of tissue distribution, expressed in Purkinje cells of the cerebellum, hippocampus, pons, medulla and eye.

Inhibits phosphatase activities of protein phosphatase 1 (PP1) and protein phosphatase 2A (PP2A) complexes. The sequence is that of Protein phosphatase 1 regulatory subunit 17 (Ppp1r17) from Mus musculus (Mouse).